Reading from the N-terminus, the 805-residue chain is Leucine--tRNA ligase (805 aa).

Residues 40 to 51 (PYPSGAGLHVGH) carry the 'HIGH' region motif. Residues 576-580 (KMSKS) carry the 'KMSKS' region motif. Lysine 579 contacts ATP.

This sequence belongs to the class-I aminoacyl-tRNA synthetase family.

The protein resides in the cytoplasm. It carries out the reaction tRNA(Leu) + L-leucine + ATP = L-leucyl-tRNA(Leu) + AMP + diphosphate. This is Leucine--tRNA ligase from Geobacillus thermodenitrificans (strain NG80-2).